Here is a 431-residue protein sequence, read N- to C-terminus: tRNA(Ile)-lysidine synthase (431 aa).

Position 19 to 24 (19 to 24) interacts with ATP; the sequence is STGIDS.

It belongs to the tRNA(Ile)-lysidine synthase family.

The protein resides in the cytoplasm. The catalysed reaction is cytidine(34) in tRNA(Ile2) + L-lysine + ATP = lysidine(34) in tRNA(Ile2) + AMP + diphosphate + H(+). Ligates lysine onto the cytidine present at position 34 of the AUA codon-specific tRNA(Ile) that contains the anticodon CAU, in an ATP-dependent manner. Cytidine is converted to lysidine, thus changing the amino acid specificity of the tRNA from methionine to isoleucine. The sequence is that of tRNA(Ile)-lysidine synthase from Staphylococcus aureus (strain COL).